The primary structure comprises 341 residues: Methionine import ATP-binding protein MetN 3 (341 aa).

Positions 2–241 constitute an ABC transporter domain; that stretch reads ILLENVKKIY…PQQDITKRFV (240 aa). 38 to 45 is a binding site for ATP; it reads GYSGAGKS.

This sequence belongs to the ABC transporter superfamily. Methionine importer (TC 3.A.1.24) family. The complex is composed of two ATP-binding proteins (MetN), two transmembrane proteins (MetI) and a solute-binding protein (MetQ).

It localises to the cell membrane. The enzyme catalyses L-methionine(out) + ATP + H2O = L-methionine(in) + ADP + phosphate + H(+). It carries out the reaction D-methionine(out) + ATP + H2O = D-methionine(in) + ADP + phosphate + H(+). Its function is as follows. Part of the ABC transporter complex MetNIQ involved in methionine import. Responsible for energy coupling to the transport system. The sequence is that of Methionine import ATP-binding protein MetN 3 from Bacillus cereus (strain ZK / E33L).